We begin with the raw amino-acid sequence, 355 residues long: Phosphatidylinositol:ceramide inositolphosphotransferase (355 aa).

Over 1 to 44 (MISYPFFSLSPPGLVPPPMAVPPVEMYSGSFWNRMRKPLPLRTQ) the chain is Cytoplasmic. Residues 45–65 (VIRFTVVFVIVSFILAVALQI) form a helical membrane-spanning segment. The Extracellular portion of the chain corresponds to 66–89 (THERMPDPKVTKPLPDLGFELLTK). A helical transmembrane segment spans residues 90–110 (ISFLSVVTDVLIAFLSSLSFF). Residues 111 to 165 (TLWKLYLLHRHCVGSGEPELPCNIPGVSRFFLSVWLCKENCRIELRNVHTIAWIR) are Cytoplasmic-facing. The chain crosses the membrane as a helical span at residues 166–186 (FITSYALLLLFRSLVIVMTSM). Residues 187 to 205 (PTPVDKCQNPPKIENPVKN) lie on the Extracellular side of the membrane. A helical transmembrane segment spans residues 206–226 (VILTVLTAGGGSIHCGDLMYS). Over 227 to 251 (GHTVILTLHLMFHWIYGAMVHWSFR) the chain is Cytoplasmic. Residues histidine 228, histidine 271, and aspartate 275 contribute to the active site. Residues 252-272 (PVVTVVAIFGYYCIVASRSHY) traverse the membrane as a helical segment. At 273-275 (TDD) the chain is on the extracellular side. The helical transmembrane segment at 276 to 296 (VLVAIYLTIATFIAVGHNADG) threads the bilayer. Over 297-355 (APWQLQLFIRWLPCCGANSREVTEDSQPVMVAFKSEAVDELRERDDSAGLSCEVSTNEV) the chain is Cytoplasmic.

Belongs to the sphingomyelin synthase family.

It is found in the membrane. Bidirectional lipid inositolphosphotransferase capable of converting phosphatidylinositol (PI) and ceramide to inositol-phosphorylceramide (IPC) and diacylglycerol (DAG) and vice versa. Direction is dependent on the relative concentrations of DAG and ceramide as phosphoinositol acceptors. Does not function strictly as a SM synthase. Essential for viability of the pathogenic bloodstream stage of this human protozoan parasite and, consequently, can be considered as potential drug target. The protein is Phosphatidylinositol:ceramide inositolphosphotransferase of Trypanosoma brucei brucei (strain 927/4 GUTat10.1).